A 199-amino-acid polypeptide reads, in one-letter code: NAD(P)H dehydrogenase (quinone) (199 aa).

The Flavodoxin-like domain maps to 4 to 190 (VLVLYYSSWG…DGARFQGRHV (187 aa)). Residues 10–15 (SSWGHV) and 78–80 (TRY) each bind FMN. W12 provides a ligand contact to NAD(+). W98 is a binding site for substrate. FMN is bound by residues 113-119 (STASQHG) and H134.

It belongs to the WrbA family. FMN is required as a cofactor.

The catalysed reaction is a quinone + NADH + H(+) = a quinol + NAD(+). It carries out the reaction a quinone + NADPH + H(+) = a quinol + NADP(+). The polypeptide is NAD(P)H dehydrogenase (quinone) (Methylorubrum extorquens (strain CM4 / NCIMB 13688) (Methylobacterium extorquens)).